The primary structure comprises 244 residues: Mannose-binding protein C (244 aa).

The N-terminal stretch at 1-18 is a signal peptide; sequence MSIFTSFLLLCVVTVVYA. Positions 38-96 constitute a Collagen-like domain; that stretch reads GLNGFPGKDGRDGAKGEKGEPGQGLRGLQGPPGKVGPTGPPGNPGLKGAVGPKGDRGDR. A disordered region spans residues 40-101; that stretch reads NGFPGKDGRD…DRGDRAEFDT (62 aa). At Pro-43 the chain carries 4-hydroxyproline. Residues 45 to 57 show a composition bias toward basic and acidic residues; the sequence is KDGRDGAKGEKGE. 4-hydroxyproline occurs at positions 58, 69, 78, and 81. Residues 65 to 74 are compositionally biased toward low complexity; it reads LQGPPGKVGP. A compositionally biased stretch (basic and acidic residues) spans 90 to 99; sequence KGDRGDRAEF. A coiled-coil region spans residues 108–126; that stretch reads IAALRSELRALRNWVLFSL. The region spanning 129–241 is the C-type lectin domain; it reads KVGKKYFVSS…CSDSFLAICE (113 aa). 2 disulfide bridges follow: Cys-151/Cys-240 and Cys-218/Cys-232. Asn-210 carries N-linked (GlcNAc...) asparagine glycosylation.

As to quaternary structure, oligomeric complex of 3 or more homotrimers. Interacts with MASP1 and MASP2. Interacts with MEP1A and MEP1B and may inhibit their catalytic activity. Post-translationally, hydroxylation on proline residues within the sequence motif, GXPG, is most likely to be 4-hydroxy as this fits the requirement for 4-hydroxylation in vertebrates.

It localises to the secreted. Calcium-dependent lectin involved in innate immune defense. Binds mannose, fucose and N-acetylglucosamine on different microorganisms and activates the lectin complement pathway. Binds to late apoptotic cells, as well as to apoptotic blebs and to necrotic cells, but not to early apoptotic cells, facilitating their uptake by macrophages. This Mus musculus (Mouse) protein is Mannose-binding protein C (Mbl2).